A 64-amino-acid chain; its full sequence is Conotoxin mr5.1a (64 aa).

An N-terminal signal peptide occupies residues 1 to 19 (MRCVPVFVILLLLIASAPS). Positions 20–48 (VDARLKTKDDMPLPSSHANIKRTLQIHRN) are excised as a propeptide. E60 carries the 4-carboxyglutamate modification.

It belongs to the conotoxin T superfamily. In terms of processing, contains 2 disulfide bonds that can be either 'C1-C3, C2-C4' or 'C1-C4, C2-C3', since these disulfide connectivities have been observed for conotoxins with cysteine framework V (for examples, see AC P0DQQ7 and AC P81755). As to expression, expressed by the venom duct.

The protein resides in the secreted. The polypeptide is Conotoxin mr5.1a (Conus marmoreus (Marble cone)).